The sequence spans 220 residues: Guanylate kinase (220 aa).

The region spanning 14–194 (GLMVVISSPS…SYAAIKSIIN (181 aa)) is the Guanylate kinase-like domain. 21-28 (SPSGAGKS) is an ATP binding site.

This sequence belongs to the guanylate kinase family.

Its subcellular location is the cytoplasm. The catalysed reaction is GMP + ATP = GDP + ADP. Essential for recycling GMP and indirectly, cGMP. The protein is Guanylate kinase of Brucella abortus (strain 2308).